The primary structure comprises 370 residues: Histidinol-phosphate aminotransferase (370 aa).

An N6-(pyridoxal phosphate)lysine modification is found at K230.

The protein belongs to the class-II pyridoxal-phosphate-dependent aminotransferase family. Histidinol-phosphate aminotransferase subfamily. In terms of assembly, homodimer. Pyridoxal 5'-phosphate serves as cofactor.

The catalysed reaction is L-histidinol phosphate + 2-oxoglutarate = 3-(imidazol-4-yl)-2-oxopropyl phosphate + L-glutamate. Its pathway is amino-acid biosynthesis; L-histidine biosynthesis; L-histidine from 5-phospho-alpha-D-ribose 1-diphosphate: step 7/9. In Leptospira interrogans serogroup Icterohaemorrhagiae serovar Lai (strain 56601), this protein is Histidinol-phosphate aminotransferase.